We begin with the raw amino-acid sequence, 496 residues long: MEDQREALRKIITTLAMKNEETQTFIYSLKQMLLNVEANSAKVQEDLEAEFQSLTSVLEELKESMLMKIKQDRASRTYELQNQLAACTRALESSEELLETANQTLQASDSEDFSQAAKEIKDGITMAPAFRLSLKAKVSDNMSHLMVDFAQERQMLQALKFLPVPSAPTIDLAESLVSDNCVTLVWHMPDEDSKIDHYVLEYRKTNFEGPPRLKEDHPWMVVEGIRQTEHTLTGLKFDMKYMNIRVKACNKAVAGEFSEPVTLETPAFMFRLDGSTSHQNLRVEDLSAEWDAMGGKVQDIKAREKEGKGRTASPVNSPARGTPSPKRMSSGRGGRDRFTAESYTVLGDTLIDGGEHYWEVRFEPDSKAFGLGVAYRSLGRFEQLGKTAASWCLHANNWLQASFTAKHANKVKVLDSPVPDCLGVHCDFHQGLLSFYNARTKQLLHTFKAKFTQPLLPAFTVWCGSFQVTTGLQVPSAVRCLQKRGSATSSSNTSLT.

The stretch at 4 to 99 (QREALRKIIT…ALESSEELLE (96 aa)) forms a coiled coil. A COS domain is found at 105-162 (LQASDSEDFSQAAKEIKDGITMAPAFRLSLKAKVSDNMSHLMVDFAQERQMLQALKFL). Positions 164–268 (VPSAPTIDLA…EPVTLETPAF (105 aa)) constitute a Fibronectin type-III domain. Residues 290-477 (WDAMGGKVQD…VTTGLQVPSA (188 aa)) form the B30.2/SPRY domain. The segment at 301–336 (KAREKEGKGRTASPVNSPARGTPSPKRMSSGRGGRD) is disordered. Omega-N-methylarginine is present on residues R310 and R320.

Oligomerization is required for binding to microtubules.

The protein localises to the cytoplasm. It localises to the cytoskeleton. Its subcellular location is the microtubule organizing center. The protein resides in the centrosome. It is found in the nucleus. The protein localises to the cleavage furrow. Its function is as follows. May be involved in microtubule organization and stabilization. The chain is Fibronectin type III and SPRY domain-containing protein 1 (Fsd1) from Mus musculus (Mouse).